Consider the following 516-residue polypeptide: Putative transposase y4bL/y4kJ/y4tB (516 aa).

The HTH IS408-type domain maps to 15-96 (IRTILRLTHE…PDWALVVREL (82 aa)). The 182-residue stretch at 138-319 (FRNRHAAGAV…SRRELFEEIE (182 aa)) folds into the Integrase catalytic domain. Residues 493-516 (ERPQAEHAAPTPAHTNIRGRSYYQ) are disordered.

This sequence belongs to the transposase IS21/IS408/IS1162 family.

This is Putative transposase y4bL/y4kJ/y4tB from Sinorhizobium fredii (strain NBRC 101917 / NGR234).